The following is a 547-amino-acid chain: Ganoderic acid synthetase CYP5150L8 (547 aa).

A helical transmembrane segment spans residues 2–22; sequence PDSSLVLVAIAGAAYIFWLVF. C487 is a binding site for heme.

It belongs to the cytochrome P450 family. Heme serves as cofactor.

It is found in the membrane. The catalysed reaction is lanosterol + reduced [NADPH--hemoprotein reductase] + O2 = 26-hydroxylanosterol + oxidized [NADPH--hemoprotein reductase] + H2O + H(+). It catalyses the reaction 26-hydroxylanosterol + reduced [NADPH--hemoprotein reductase] + O2 = 26-oxolanosterol + oxidized [NADPH--hemoprotein reductase] + 2 H2O + H(+). It carries out the reaction 26-oxolanosterol + reduced [NADPH--hemoprotein reductase] + O2 = 3beta-hydroxy-lanosta-8, 24-dien-26-oate + oxidized [NADPH--hemoprotein reductase] + H2O + 2 H(+). Its pathway is secondary metabolite biosynthesis; terpenoid biosynthesis. Functionally, cytochrome P450 monooxygenase that is involved in the biosynthesis of ganoderic acids (GA), a group of highly oxygenated lanostane-type triterpenoids which well recognized as a main group of unique bioactive compounds in the medicinal mushroom Ganoderma lucidum. CYP5150L8 alone is able to catalyze the three-step oxidations at C-26 from lanosterol to 3-hydroxy-lanosta-8,24-dien-26-oic acid (also called ganoderic acid Z or HLDOA). The methyl group of lanosterol at C-26 is first oxidized into hydroxyl group to form 3-hydroxy-lanosta-8,24-dien-26-ol (HLDO). The hydroxyl group at C-26 of HLDO is further converted into a formyl group to form 3-hydroxy-lanosta-8,24-dien-26-al (HLDA). Finally, the formyl group is oxidized into a carboxyl group to produce 3-hydroxy-lanosta-8,24-dien-26-oic acid (HLDOA). This Ganoderma lucidum (Ling zhi medicinal fungus) protein is Ganoderic acid synthetase CYP5150L8.